The primary structure comprises 500 residues: Proline/betaine transporter (500 aa).

The Cytoplasmic portion of the chain corresponds to 1 to 37 (MLKRKKIKPITLGDVTIIDDGKLRKAITAASLGNAME). Residues 38–58 (WFDFGVYGFVAYALGKVFFPG) form a helical membrane-spanning segment. Over 59–65 (ADPSVQM) the chain is Periplasmic. The helical transmembrane segment at 66 to 86 (IAALATFSVPFLIRPLGGLFF) threads the bilayer. Residues 87–97 (GMLGDKYGRQK) lie on the Cytoplasmic side of the membrane. A helical membrane pass occupies residues 98 to 118 (ILAITIVIMSISTFCIGLIPS). The Periplasmic segment spans residues 119–121 (YAT). A helical transmembrane segment spans residues 122–142 (IGIWAPILLLLCKMAQGFSVG). Over 143–169 (GEYTGASIFVAEYSPDRKRGFMGSWLD) the chain is Cytoplasmic. A helical membrane pass occupies residues 170–190 (FGSIAGFVLGAGVVVLISTIV). The Periplasmic portion of the chain corresponds to 191 to 194 (GEEN). A helical membrane pass occupies residues 195 to 215 (FLEWGWRIPFFIALPLGIIGL). Residues 216 to 260 (YLRHALEETPAFQQHVDKLEQGDREGLQDGPKVSFKEIATKHWRS) lie on the Cytoplasmic side of the membrane. Residues 261–281 (LLSCIGLVIATNVTYYMLLTY) form a helical membrane-spanning segment. Topologically, residues 282–297 (MPSYLSHNLHYSEDHG) are periplasmic. Residues 298-318 (VLIIIAIMIGMLFVQPVMGLL) traverse the membrane as a helical segment. The Cytoplasmic segment spans residues 319 to 325 (SDRFGRR). The chain crosses the membrane as a helical span at residues 326–346 (PFVIMGSIALFALAIPAFILI). Topologically, residues 347–350 (NSNV) are periplasmic. The helical transmembrane segment at 351–371 (IGLIFAGLLMLAVILNCFTGV) threads the bilayer. Over 372–390 (MASTLPAMFPTHIRYSALA) the chain is Cytoplasmic. Residues 391–411 (AAFNISVLIAGLTPTLAAWLV) traverse the membrane as a helical segment. Residues 412-416 (ESSQD) are Periplasmic-facing. The chain crosses the membrane as a helical span at residues 417–437 (LMMPAYYLMVIAVIGLITGIS). Residues 438–500 (MKETANRPLK…LVQQHPRIDE (63 aa)) lie on the Cytoplasmic side of the membrane. Residues 453–498 (ASDIQEAKEILGEHYDNIEQKIDDIDQEIAELQVKRSRLVQQHPRI) adopt a coiled-coil conformation.

This sequence belongs to the major facilitator superfamily. Metabolite:H+ Symporter (MHS) family (TC 2.A.1.6) family.

It localises to the cell inner membrane. In terms of biological role, proton symporter that senses osmotic shifts and responds by importing osmolytes such as proline, glycine betaine, stachydrine, pipecolic acid, ectoine and taurine. It is both an osmosensor and an osmoregulator which is available to participate early in the bacterial osmoregulatory response. This chain is Proline/betaine transporter (proP), found in Salmonella typhimurium (strain LT2 / SGSC1412 / ATCC 700720).